The sequence spans 118 residues: UPF0295 protein BcerKBAB4_0454 (118 aa).

Transmembrane regions (helical) follow at residues 12-32 (IRTF…LGVF) and 43-63 (FMMV…WIGM).

Belongs to the UPF0295 family.

Its subcellular location is the cell membrane. This is UPF0295 protein BcerKBAB4_0454 from Bacillus mycoides (strain KBAB4) (Bacillus weihenstephanensis).